Reading from the N-terminus, the 383-residue chain is MPKLPPLSLYIHIPWCVQKCPYCDFNSHAQKSDIPEQDYIYHLLQDLQADLQRFKDSIQQRKLHSIFIGGGTPSLFSAESIAYLLKEIKKQIDFEDNIEITLEANPGTVEAERFKGYVSAGIMRISMGIQSFNDDKLQRLGRIHNAAEAKSAVNLAKVSGLKSFNLDLMHGLPNQTLEEALDDLRQAIELSPPHISWYQLTIEPNTMFAYRPPKLPDDDALWDIFEQGHQLLTMAGYQQYETSAYAKAGFQCKHNLNYWRFGDYLAIGCGAHGKLTFPTGEITRFSKTKHPKGYLRGEYLYEEKNVPKIDRPFEFFMNRFRLLEAVPKQEFEDYTGLSQSAVKNQIDFAIQQNYIVENADSWQITEHGKLFLNELLELFLTEE.

Residues 1–241 (MPKLPPLSLY…LTMAGYQQYE (241 aa)) form the Radical SAM core domain. Tyr10 lines the S-adenosyl-L-methionine pocket. [4Fe-4S] cluster contacts are provided by Cys16, Cys20, and Cys23. S-adenosyl-L-methionine contacts are provided by residues Gly70, 71–72 (GT), Glu103, Gln130, Arg142, and Asp167.

This sequence belongs to the anaerobic coproporphyrinogen-III oxidase family. HemW subfamily. It depends on [4Fe-4S] cluster as a cofactor.

Its subcellular location is the cytoplasm. Its function is as follows. Probably acts as a heme chaperone, transferring heme to an unknown acceptor. Binds one molecule of heme per monomer, possibly covalently. Binds 1 [4Fe-4S] cluster. The cluster is coordinated with 3 cysteines and an exchangeable S-adenosyl-L-methionine. This chain is Heme chaperone HemW, found in Haemophilus influenzae (strain ATCC 51907 / DSM 11121 / KW20 / Rd).